A 429-amino-acid chain; its full sequence is Histidinol dehydrogenase (429 aa).

NAD(+) contacts are provided by Tyr127, Gln188, and Asn211. Positions 234, 256, and 259 each coordinate substrate. Zn(2+) is bound by residues Gln256 and His259. Residues Glu324 and His325 each act as proton acceptor in the active site. Substrate contacts are provided by His325, Asp358, Glu412, and His417. Asp358 serves as a coordination point for Zn(2+). His417 contacts Zn(2+).

It belongs to the histidinol dehydrogenase family. Zn(2+) serves as cofactor.

The enzyme catalyses L-histidinol + 2 NAD(+) + H2O = L-histidine + 2 NADH + 3 H(+). Its pathway is amino-acid biosynthesis; L-histidine biosynthesis; L-histidine from 5-phospho-alpha-D-ribose 1-diphosphate: step 9/9. Catalyzes the sequential NAD-dependent oxidations of L-histidinol to L-histidinaldehyde and then to L-histidine. The protein is Histidinol dehydrogenase of Bacillus cereus (strain ATCC 14579 / DSM 31 / CCUG 7414 / JCM 2152 / NBRC 15305 / NCIMB 9373 / NCTC 2599 / NRRL B-3711).